The sequence spans 148 residues: Large ribosomal subunit protein bL9 (148 aa).

Belongs to the bacterial ribosomal protein bL9 family.

Binds to the 23S rRNA. This chain is Large ribosomal subunit protein bL9, found in Ruminiclostridium cellulolyticum (strain ATCC 35319 / DSM 5812 / JCM 6584 / H10) (Clostridium cellulolyticum).